The primary structure comprises 293 residues: Formamidopyrimidine-DNA glycosylase (293 aa).

The active-site Schiff-base intermediate with DNA is the P2. E3 serves as the catalytic Proton donor. The active-site Proton donor; for beta-elimination activity is the K58. Residues H104, R123, and R166 each coordinate DNA. An FPG-type zinc finger spans residues 257–293 (KVYDREGEPCPTLRCKGHVQRIVQAGRSTFFCATCQR). R283 (proton donor; for delta-elimination activity) is an active-site residue.

It belongs to the FPG family. As to quaternary structure, monomer. Zn(2+) serves as cofactor.

The enzyme catalyses Hydrolysis of DNA containing ring-opened 7-methylguanine residues, releasing 2,6-diamino-4-hydroxy-5-(N-methyl)formamidopyrimidine.. It carries out the reaction 2'-deoxyribonucleotide-(2'-deoxyribose 5'-phosphate)-2'-deoxyribonucleotide-DNA = a 3'-end 2'-deoxyribonucleotide-(2,3-dehydro-2,3-deoxyribose 5'-phosphate)-DNA + a 5'-end 5'-phospho-2'-deoxyribonucleoside-DNA + H(+). In terms of biological role, involved in base excision repair of DNA damaged by oxidation or by mutagenic agents. Acts as a DNA glycosylase that recognizes and removes damaged bases. Has a preference for oxidized purines, such as 7,8-dihydro-8-oxoguanine (8-oxoG). Has AP (apurinic/apyrimidinic) lyase activity and introduces nicks in the DNA strand. Cleaves the DNA backbone by beta-delta elimination to generate a single-strand break at the site of the removed base with both 3'- and 5'-phosphates. This chain is Formamidopyrimidine-DNA glycosylase, found in Azorhizobium caulinodans (strain ATCC 43989 / DSM 5975 / JCM 20966 / LMG 6465 / NBRC 14845 / NCIMB 13405 / ORS 571).